A 68-amino-acid chain; its full sequence is Protease A inhibitor 3 (68 aa).

Residue methionine 1 is modified to N-acetylmethionine. The span at 1–14 (MNTDQQKVSEIFQS) shows a compositional bias: polar residues. Disordered stretches follow at residues 1 to 21 (MNTD…KLQG) and 33 to 68 (MASQ…HKKE). The tract at residues 1–32 (MNTDQQKVSEIFQSSKEKLQGDAKVVSDAFKK) is inhibitory domain. Residues 33 to 53 (MASQDKDGKTTDADESEKHNY) are compositionally biased toward basic and acidic residues.

This sequence belongs to the protease inhibitor I34 family.

In terms of biological role, specific and potent inhibitor for yeast aspartic protease A (yscA). The proteinase acts as a folding template stabilizing the helical conformation in the inhibitor, which results in the potent and specific blockage of the proteolytic activity. In Saccharomyces cerevisiae (strain ATCC 204508 / S288c) (Baker's yeast), this protein is Protease A inhibitor 3 (PAI3).